The following is a 396-amino-acid chain: MEVVGCKAKESSCTLRPAAMLFHGISGDHIQGIMEEMERRSKSESRLAKTVQMNGRETTMPSMSPEKPALCAGCGGKISDRYYLLAVDKQWHLRCLKCCECKLALESELTCFAKDGSIYCKEDYYRRFSVQRCARCHLGISASEMVMRARDSVYHLSCFTCTTCNKTLTTGDHFGMKDNLVYCRVHFETLIQGEYHPQLNYAELAAKGGGLALPYFNGTGTVQKGRPRKRKSPAMGIDIGSYSSGCNENDADHLDRDQQPYPPSQKTKRMRTSFKHHQLRTMKSYFAINHNPDAKDLKQLAQKTGLTKRVLQVWFQNARAKFRRNVLRQENGGVDKADGTSLPPPSSDSGALTPPSTATTLTDLTNPSITVVTSVTSSLDSHESGSPPQTTLTNLF.

LIM zinc-binding domains lie at 69–130 (ALCA…RFSV) and 131–193 (QRCA…LIQG). Disordered stretches follow at residues 248–272 (ENDADHLDRDQQPYPPSQKTKRMRT), 328–365 (RQENGGVDKADGTSLPPPSSDSGALTPPSTATTLTDLT), and 377–396 (SSLDSHESGSPPQTTLTNLF). The segment at residues 267 to 326 (TKRMRTSFKHHQLRTMKSYFAINHNPDAKDLKQLAQKTGLTKRVLQVWFQNARAKFRRNV) is a DNA-binding region (homeobox). The segment covering 352–365 (LTPPSTATTLTDLT) has biased composition (low complexity). The span at 384–396 (SGSPPQTTLTNLF) shows a compositional bias: polar residues.

Its subcellular location is the nucleus. May be involved in gonadal development. In Danio rerio (Zebrafish), this protein is LIM/homeobox protein Lhx9 (lhx9).